We begin with the raw amino-acid sequence, 95 residues long: Co-chaperonin GroES (95 aa).

Residues Val-12–Lys-22 show a composition bias toward basic and acidic residues. Residues Val-12–Gly-38 form a disordered region.

This sequence belongs to the GroES chaperonin family. As to quaternary structure, heptamer of 7 subunits arranged in a ring. Interacts with the chaperonin GroEL.

Its subcellular location is the cytoplasm. In terms of biological role, together with the chaperonin GroEL, plays an essential role in assisting protein folding. The GroEL-GroES system forms a nano-cage that allows encapsulation of the non-native substrate proteins and provides a physical environment optimized to promote and accelerate protein folding. GroES binds to the apical surface of the GroEL ring, thereby capping the opening of the GroEL channel. The sequence is that of Co-chaperonin GroES from Chloroherpeton thalassium (strain ATCC 35110 / GB-78).